The sequence spans 76 residues: MEMLLFLNESYIFHRLRMWSIVLWHSCVFVCAECGNANYRVPRCLIKPFSVPVTFPFSVKKNIRILDLDPRTEAYC.

The protein belongs to the UPF0377 family.

The protein is Putative UPF0377 protein YGL260W of Saccharomyces cerevisiae (strain ATCC 204508 / S288c) (Baker's yeast).